The chain runs to 269 residues: Protein shisa-1 (269 aa).

Residues 1–18 (MEFIVLLTVCALLGLSCG) form the signal peptide. The Extracellular segment spans residues 19–98 (QHGEYCHGWT…LPPTVPTYFP (80 aa)). Residues 99 to 119 (FLLVGSIFVSFVILGSLVGLC) form a helical membrane-spanning segment. The Cytoplasmic segment spans residues 120 to 269 (CCKCLKPEDD…TVCSGSPSKC (150 aa)). Residues 129–167 (DTQVSGPAPIQSRLLDQDPSTDTSRHSSSSSASMPRPPI) form a disordered region. The segment covering 146-162 (DPSTDTSRHSSSSSASM) has biased composition (low complexity).

This sequence belongs to the shisa family. Interacts with immature forms of fzd8 and fgfr.

It localises to the endoplasmic reticulum. The protein resides in the membrane. Its function is as follows. Required for head formation during gastrulation. Functions as an inhibitor for the caudalizing signals wnt and fgf, does not inhibit bmp, activin and nodal signaling in head formation process. Induces retention of fzd8 in the endoplasmic reticulum and inhibits trafficking of fzd8 to the cell surface. In Xenopus laevis (African clawed frog), this protein is Protein shisa-1 (shisa1).